A 416-amino-acid chain; its full sequence is Notoamide biosynthesis cluster protein N' (416 aa).

Residues 1 to 16 (MRAALLTLAFTALAAA) form the signal peptide. N-linked (GlcNAc...) asparagine glycans are attached at residues Asn119 and Asn262.

Functionally, part of the gene cluster that mediates the biosynthesis of notoamide, a fungal indole alkaloid that belongs to a family of natural products containing a characteristic bicyclo[2.2.2]diazaoctane core. The first step of notoamide biosynthesis involves coupling of L-proline and L-tryptophan by the bimodular NRPS notE', to produce cyclo-L-tryptophan-L-proline called brevianamide F. The reverse prenyltransferase notF' then acts as a deoxybrevianamide E synthase and converts brevianamide F to deoxybrevianamide E via reverse prenylation at C-2 of the indole ring leading to the bicyclo[2.2.2]diazaoctane core. Deoxybrevianamide E is further hydroxylated at C-6 of the indole ring, likely catalyzed by the cytochrome P450 monooxygenase notG', to yield 6-hydroxy-deoxybrevianamide E. 6-hydroxy-deoxybrevianamide E is a specific substrate of the prenyltransferase notC' for normal prenylation at C-7 to produce 6-hydroxy-7-prenyl-deoxybrevianamide, also called notoamide S. As the proposed pivotal branching point in notoamide biosynthesis, notoamide S can be diverted to notoamide E through an oxidative pyran ring closure putatively catalyzed by either notH' cytochrome P450 monooxygenase or the notD' FAD-linked oxidoreductase. This step would be followed by an indole 2,3-epoxidation-initiated pinacol-like rearrangement catalyzed by the notB' FAD-dependent monooxygenase leading to the formation of notoamide C and notoamide D. On the other hand notoamide S is converted to notoamide T by notH' (or notD'), a bifunctional oxidase that also functions as the intramolecular Diels-Alderase responsible for generation of (-)-notoamide T. To generate antipodal (+)-notoaminide T, notH (or notD) in Aspergillus strain MF297-2 is expected to catalyze a Diels-Alder reaction leading to the opposite stereochemistry. The remaining oxidoreductase notD' (or notH') likely catalyzes the oxidative pyran ring formation to yield (-)-stephacidin A. The FAD-dependent monooxygenase notI' is highly similar to notB' and is predicted to catalyze a similar conversion from (-)-stephacidin A to (+)-notoamide B via the 2,3-epoxidation of (-)-stephacidin A followed by a pinacol-type rearrangement. Finally, it remains unclear which enzyme could be responsible for the final hydroxylation steps leading to notoamide A and sclerotiamide. The function of notN' in the notoamide biosynthesis has not been determined yet. This Aspergillus versicolor protein is Notoamide biosynthesis cluster protein N'.